The primary structure comprises 28 residues: Phospholipase A2 3 (28 aa).

Belongs to the phospholipase A2 family. Group I subfamily. The cofactor is Ca(2+). Expressed by the venom gland.

Its subcellular location is the secreted. The enzyme catalyses a 1,2-diacyl-sn-glycero-3-phosphocholine + H2O = a 1-acyl-sn-glycero-3-phosphocholine + a fatty acid + H(+). Its function is as follows. Snake venom phospholipase A2 (PLA2) that inhibits neuromuscular transmission by blocking acetylcholine release from the nerve termini. PLA2 catalyzes the calcium-dependent hydrolysis of the 2-acyl groups in 3-sn-phosphoglycerides. The polypeptide is Phospholipase A2 3 (Micrurus nigrocinctus (Central American coral snake)).